A 207-amino-acid chain; its full sequence is Nitrile hydratase subunit alpha (207 aa).

The Fe(3+) site is built by C110, C113, S114, and C115. A Cysteine sulfinic acid (-SO2H) modification is found at C113. Cysteine sulfenic acid (-SOH) is present on C115.

The protein belongs to the nitrile hydratase subunit alpha family. In terms of assembly, heterodimer of an alpha and a beta chain. Fe(3+) serves as cofactor. Oxidation on Cys-113 is essential for the activity. In terms of processing, oxidation on Cys-115 stabilizes the Fe-NO ligand coordinated in the inactive form.

It catalyses the reaction an aliphatic primary amide = an aliphatic nitrile + H2O. With respect to regulation, inactivated by nitrosylation of the iron center in the dark and activated by photo-induced nitric oxide (NO) release. Inactivated by oxidation of Cys-115 to a sulfenic acid. In terms of biological role, NHase catalyzes the hydration of various nitrile compounds to the corresponding amides. Industrial production of acrylamide is now being developed using some of the enzymes of this class. This Rhodococcus erythropolis (Arthrobacter picolinophilus) protein is Nitrile hydratase subunit alpha (nthA).